A 253-amino-acid polypeptide reads, in one-letter code: Ubiquinone/menaquinone biosynthesis C-methyltransferase UbiE (253 aa).

S-adenosyl-L-methionine contacts are provided by residues Thr76, Asp97, 125 to 126 (NA), and Ser142.

This sequence belongs to the class I-like SAM-binding methyltransferase superfamily. MenG/UbiE family.

The catalysed reaction is a 2-demethylmenaquinol + S-adenosyl-L-methionine = a menaquinol + S-adenosyl-L-homocysteine + H(+). It carries out the reaction a 2-methoxy-6-(all-trans-polyprenyl)benzene-1,4-diol + S-adenosyl-L-methionine = a 5-methoxy-2-methyl-3-(all-trans-polyprenyl)benzene-1,4-diol + S-adenosyl-L-homocysteine + H(+). The protein operates within quinol/quinone metabolism; menaquinone biosynthesis; menaquinol from 1,4-dihydroxy-2-naphthoate: step 2/2. It functions in the pathway cofactor biosynthesis; ubiquinone biosynthesis. In terms of biological role, methyltransferase required for the conversion of demethylmenaquinol (DMKH2) to menaquinol (MKH2) and the conversion of 2-polyprenyl-6-methoxy-1,4-benzoquinol (DDMQH2) to 2-polyprenyl-3-methyl-6-methoxy-1,4-benzoquinol (DMQH2). This is Ubiquinone/menaquinone biosynthesis C-methyltransferase UbiE from Xylella fastidiosa (strain M23).